The sequence spans 200 residues: Putative vacuolar protein sorting-associated protein 24 homolog 2 (200 aa).

Positions Thr2 to Asp23 form a coiled coil.

Belongs to the SNF7 family. Component of the endosomal sorting required for transport complex III (ESCRT-III), composed at least of VPS2, VPS20, VPS24 and VPS32.

Its subcellular location is the endosome. Functionally, component of the ESCRT-III complex, which is required for multivesicular bodies (MVBs) formation and sorting of endosomal cargo proteins into MVBs. The ESCRT-III complex is probably involved in the concentration of MVB cargo. The polypeptide is Putative vacuolar protein sorting-associated protein 24 homolog 2 (VPS24-2) (Arabidopsis thaliana (Mouse-ear cress)).